A 237-amino-acid chain; its full sequence is Uridylate kinase (237 aa).

11–14 (KLSG) lines the ATP pocket. Residue Gly53 coordinates UMP. Gly54 and Arg58 together coordinate ATP. Residues Asp73 and 134 to 141 (TGNPFFTT) each bind UMP. ATP-binding residues include Thr161, Tyr167, and Asp170.

This sequence belongs to the UMP kinase family. As to quaternary structure, homohexamer.

The protein localises to the cytoplasm. It catalyses the reaction UMP + ATP = UDP + ADP. The protein operates within pyrimidine metabolism; CTP biosynthesis via de novo pathway; UDP from UMP (UMPK route): step 1/1. With respect to regulation, inhibited by UTP. Catalyzes the reversible phosphorylation of UMP to UDP. This is Uridylate kinase from Nitrosomonas eutropha (strain DSM 101675 / C91 / Nm57).